Here is a 129-residue protein sequence, read N- to C-terminus: Virion-associated protein (129 aa).

2 coiled-coil regions span residues 1-31 (MANL…ILEL) and 38-59 (TKES…LIND). Positions 122–129 (PAGWPNQF) are capsid binding.

This sequence belongs to the caulimovirus ORF III family. In terms of assembly, homotetramer, through coiled-coil domain. Homotrimer when interacts with icosehadral capsid. Interacts with capsid protein, and with Movement protein.

It is found in the virion. The protein localises to the host cell junction. Its subcellular location is the host plasmodesma. Plays a role in virus cell-to-cell and plant-to-plant transmission. Interacts with virion icosahedral capsid and movement protein, thereby facilitating virion cell-to-cell transmission through plasmodesmata opened by viral movement protein. Also interacts with aphid transmission factor, attaching the virion to aphid stylet when the animal feeds on an virus infected plant. Aphid saliva may later detach the virion, inducing release of infectious particles when the animal feeds on a new plant. The chain is Virion-associated protein from Arabidopsis thaliana (Mouse-ear cress).